The following is a 707-amino-acid chain: Polyribonucleotide nucleotidyltransferase (707 aa).

Residues Asp-486 and Asp-492 each contribute to the Mg(2+) site. The KH domain occupies 553–612; sequence PTVTTLRVLPDKIPIIIGPAGKNIKKIIEETKVKIDLDPEGLVKIYATSKEAAEKAVSMI. The S1 motif domain occupies 622 to 690; that stretch reads GEVYMGKVTR…DQGRIKVSLK (69 aa).

Belongs to the polyribonucleotide nucleotidyltransferase family. Requires Mg(2+) as cofactor.

It localises to the cytoplasm. It carries out the reaction RNA(n+1) + phosphate = RNA(n) + a ribonucleoside 5'-diphosphate. Involved in mRNA degradation. Catalyzes the phosphorolysis of single-stranded polyribonucleotides processively in the 3'- to 5'-direction. The sequence is that of Polyribonucleotide nucleotidyltransferase from Sulfurihydrogenibium azorense (strain DSM 15241 / OCM 825 / Az-Fu1).